The chain runs to 716 residues: 1,4-alpha-glucan branching enzyme GlgB (716 aa).

Asp-398 serves as the catalytic Nucleophile. The active-site Proton donor is Glu-451.

This sequence belongs to the glycosyl hydrolase 13 family. GlgB subfamily. Monomer.

The enzyme catalyses Transfers a segment of a (1-&gt;4)-alpha-D-glucan chain to a primary hydroxy group in a similar glucan chain.. It functions in the pathway glycan biosynthesis; glycogen biosynthesis. Functionally, catalyzes the formation of the alpha-1,6-glucosidic linkages in glycogen by scission of a 1,4-alpha-linked oligosaccharide from growing alpha-1,4-glucan chains and the subsequent attachment of the oligosaccharide to the alpha-1,6 position. This Nitrobacter winogradskyi (strain ATCC 25391 / DSM 10237 / CIP 104748 / NCIMB 11846 / Nb-255) protein is 1,4-alpha-glucan branching enzyme GlgB.